The sequence spans 469 residues: Phosphatidylinositol 4-kinase type 2-alpha (469 aa).

Disordered stretches follow at residues 1–30 and 50–72; these read MDET…ATVP and TATS…DQER. Residues 16–25 show a composition bias toward polar residues; that stretch reads EYSYQSQCSP. Positions 50–60 are enriched in low complexity; it reads TATSCGSAASG. The PI3K/PI4K catalytic domain occupies 115–443; the sequence is DILPERISQG…VQTPPVIVET (329 aa). A G-loop region spans residues 121-127; it reads ISQGSSG. Residues 122-128 and K143 contribute to the ATP site; that span reads SQGSSGS. An important for substrate binding region spans residues 148–150; sequence EPY. Residues 156–169 form an important for interaction with membranes region; that stretch reads KWTKWLQKLCCPCC. S-palmitoyl cysteine attachment occurs at residues C165, C166, C168, and C169. Residue 252–255 coordinates ATP; sequence QIFV. An important for interaction with membranes region spans residues 259–267; it reads KDADYWLRR. The catalytic loop stretch occupies residues 296-304; sequence RNTDRGNDN. The activation loop stretch occupies residues 334 to 354; sequence AIDNGLAFPLKHPDSWRAYPF. D336 contributes to the ATP binding site. The tract at residues 349–358 is important for interaction with membranes; sequence WRAYPFYWAW.

It belongs to the PI3/PI4-kinase family. Type II PI4K subfamily.

It localises to the golgi apparatus. It is found in the trans-Golgi network membrane. The protein resides in the membrane raft. The protein localises to the endosome. Its subcellular location is the endosome membrane. It localises to the cytoplasmic vesicle. It is found in the cell projection. The protein resides in the dendrite. The protein localises to the presynaptic cell membrane. Its subcellular location is the synapse. It localises to the synaptosome. It is found in the mitochondrion. The protein resides in the membrane. The protein localises to the cell membrane. Its subcellular location is the perikaryon. It localises to the neuron projection. It catalyses the reaction a 1,2-diacyl-sn-glycero-3-phospho-(1D-myo-inositol) + ATP = a 1,2-diacyl-sn-glycero-3-phospho-(1D-myo-inositol 4-phosphate) + ADP + H(+). In terms of biological role, membrane-bound phosphatidylinositol-4 kinase (PI4-kinase) that catalyzes the phosphorylation of phosphatidylinositol (PI) to phosphatidylinositol 4-phosphate (PI4P), a lipid that plays important roles in endocytosis, Golgi function, protein sorting and membrane trafficking. Besides, phosphorylation of phosphatidylinositol (PI) to phosphatidylinositol 4-phosphate (PI4P) is the first committed step in the generation of phosphatidylinositol 4,5-bisphosphate (PIP2), a precursor of the second messenger inositol 1,4,5-trisphosphate (InsP3). The protein is Phosphatidylinositol 4-kinase type 2-alpha (pi4k2a) of Xenopus laevis (African clawed frog).